A 339-amino-acid chain; its full sequence is Exonuclease subunit 1 (339 aa).

To phage T5 protein D12 and to yeast RAD52. Consists of two subunits: gp46 and gp47.

Its function is as follows. Exonuclease that plays a role in viral genome replication, DNA recombination, and host DNA degradation. This chain is Exonuclease subunit 1 (47), found in Escherichia coli (Bacteriophage T4).